Here is a 498-residue protein sequence, read N- to C-terminus: Ammonium transporter 1 member 3 (498 aa).

Helical transmembrane passes span 41-61 (LLFSAYLVFAMQLGFAMLCAG), 76-96 (VLDAAAGALFYYLFGFAFAFG), 122-142 (FFLFQWAFAIAAAGITSGSIA), 150-170 (YLIYSAFLTGFVYPVVSHWFW), 194-214 (FAGSGVVHLVGGIAGLWGAFI), 238-258 (LVVLGTFLLWFGWFGFNPGSF), 277-299 (AVGRTAVTTSLAGSVAALTTLYG), 307-327 (WNVTDVCNGLLGGFAAITAGC), 329-349 (VVDPWASVICGFVSAWVLIGC), 362-382 (LEATQLHAGCGAWGIIFTALF), and 414-434 (IVQILVIVGWVSATMGTLFYV). The interval 473 to 498 (RAKSAAETARVEPRKSPEQAAAGQFV) is disordered.

The protein belongs to the ammonia transporter channel (TC 1.A.11.2) family. Expressed in roots.

It localises to the membrane. Functionally, ammonium transporter probably involved in ammonium uptake from the soil. This chain is Ammonium transporter 1 member 3 (AMT1-3), found in Oryza sativa subsp. japonica (Rice).